Reading from the N-terminus, the 879-residue chain is Alanine--tRNA ligase (879 aa).

The Zn(2+) site is built by H566, H570, C668, and H672.

Belongs to the class-II aminoacyl-tRNA synthetase family. It depends on Zn(2+) as a cofactor.

Its subcellular location is the cytoplasm. It catalyses the reaction tRNA(Ala) + L-alanine + ATP = L-alanyl-tRNA(Ala) + AMP + diphosphate. Catalyzes the attachment of alanine to tRNA(Ala) in a two-step reaction: alanine is first activated by ATP to form Ala-AMP and then transferred to the acceptor end of tRNA(Ala). Also edits incorrectly charged Ser-tRNA(Ala) and Gly-tRNA(Ala) via its editing domain. In Clostridium novyi (strain NT), this protein is Alanine--tRNA ligase.